We begin with the raw amino-acid sequence, 398 residues long: Acetylornithine aminotransferase (398 aa).

F129 is a binding site for pyridoxal 5'-phosphate. R132 contributes to the N(2)-acetyl-L-ornithine binding site. Pyridoxal 5'-phosphate is bound at residue 214 to 217 (DEVQ). At K243 the chain carries N6-(pyridoxal phosphate)lysine. A N(2)-acetyl-L-ornithine-binding site is contributed by S271. Residue T272 coordinates pyridoxal 5'-phosphate.

The protein belongs to the class-III pyridoxal-phosphate-dependent aminotransferase family. ArgD subfamily. In terms of assembly, homodimer. Pyridoxal 5'-phosphate serves as cofactor.

The protein resides in the cytoplasm. The enzyme catalyses N(2)-acetyl-L-ornithine + 2-oxoglutarate = N-acetyl-L-glutamate 5-semialdehyde + L-glutamate. It functions in the pathway amino-acid biosynthesis; L-arginine biosynthesis; N(2)-acetyl-L-ornithine from L-glutamate: step 4/4. The protein is Acetylornithine aminotransferase of Neisseria meningitidis serogroup B (strain ATCC BAA-335 / MC58).